The following is a 277-amino-acid chain: Proteasome subunit beta type-7 (277 aa).

Residues 1-43 constitute a propeptide, removed in mature form; the sequence is MAAVSVFQAPVGGFSFDNCRRNAVLEADFAKKGFKLPKARKTG. The active-site Nucleophile is the Thr-44.

The protein belongs to the peptidase T1B family. The 26S proteasome consists of a 20S proteasome core and two 19S regulatory subunits. The 20S proteasome core is a barrel-shaped complex made of 28 subunits that are arranged in four stacked rings. The two outer rings are each formed by seven alpha subunits, and the two inner rings are formed by seven beta subunits. The proteolytic activity is exerted by three beta-subunits PSMB5, PSMB6 and PSMB7.

It localises to the cytoplasm. The protein resides in the nucleus. The enzyme catalyses Cleavage of peptide bonds with very broad specificity.. Component of the 20S core proteasome complex involved in the proteolytic degradation of most intracellular proteins. This complex plays numerous essential roles within the cell by associating with different regulatory particles. Associated with two 19S regulatory particles, forms the 26S proteasome and thus participates in the ATP-dependent degradation of ubiquitinated proteins. The 26S proteasome plays a key role in the maintenance of protein homeostasis by removing misfolded or damaged proteins that could impair cellular functions, and by removing proteins whose functions are no longer required. Associated with the PA200 or PA28, the 20S proteasome mediates ubiquitin-independent protein degradation. This type of proteolysis is required in several pathways including spermatogenesis (20S-PA200 complex) or generation of a subset of MHC class I-presented antigenic peptides (20S-PA28 complex). Within the 20S core complex, PSMB7 displays a trypsin-like activity. This is Proteasome subunit beta type-7 (Psmb7) from Rattus norvegicus (Rat).